Here is a 108-residue protein sequence, read N- to C-terminus: Structural protein 1 (108 aa).

Residues Met1–Asn77 lie on the Intravirion side of the membrane. Residues Val78 to Val98 form a helical; Signal-anchor for type II membrane protein membrane-spanning segment. Residues His99–Glu108 lie on the Virion surface side of the membrane.

The protein belongs to the varicellovirus ORF1 protein family. As to quaternary structure, homodimer. In terms of processing, phosphorylated.

The protein resides in the virion membrane. The protein localises to the host Golgi apparatus membrane. The protein is Structural protein 1 of Homo sapiens (Human).